The sequence spans 96 residues: Large ribosomal subunit protein bL21 (96 aa).

This sequence belongs to the bacterial ribosomal protein bL21 family. Part of the 50S ribosomal subunit. Contacts protein L20.

Its function is as follows. This protein binds to 23S rRNA in the presence of protein L20. The protein is Large ribosomal subunit protein bL21 of Chlorobium chlorochromatii (strain CaD3).